A 213-amino-acid chain; its full sequence is Glutathione S-transferase DHAR1, mitochondrial (213 aa).

Residues K8 and D19 each coordinate glutathione. K8 and D19 together coordinate L-ascorbate. Residues 10-83 form the GST N-terminal domain; sequence AVGAPDHLGD…DVIVGILEEK (74 aa). C20 (nucleophile) is an active-site residue. C20 carries the post-translational modification S-glutathionyl cysteine. Residues 20-25 carry the Glutathione-binding motif; the sequence is CPFSQR. Glutathione contacts are provided by K47, V60, and S73. Residues 84–213 enclose the GST C-terminal domain; it reads YPDPPLKTPA…ISGWAPKVNP (130 aa). The Copper-binding signature appears at 133–137; sequence HLKSH. Glutathione is bound by residues H160 and W207. K210 contributes to the L-ascorbate binding site.

This sequence belongs to the GST superfamily. DHAR family. As to quaternary structure, monomer. Interacts with copper (Cu). Spontaneous S-glutathionylation in the presence of oxidized glutathione (GSSG). Expressed at least in roots and leaves.

The protein localises to the mitochondrion. Its subcellular location is the cytoplasm. The protein resides in the cytosol. It is found in the peroxisome. It localises to the membrane. It carries out the reaction RX + glutathione = an S-substituted glutathione + a halide anion + H(+). It catalyses the reaction L-dehydroascorbate + 2 glutathione = glutathione disulfide + L-ascorbate. Displays a dual function. As a soluble protein, exhibits glutathione-dependent thiol transferase and dehydroascorbate (DHA) reductase activities. Key component of the ascorbate recycling system. Involved in the redox homeostasis, especially in scavenging of ROS under oxidative stresses, subsequently to biotic or abiotic inducers. As a peripheral membrane protein, could also function as voltage-gated ion channel. The chain is Glutathione S-transferase DHAR1, mitochondrial from Arabidopsis thaliana (Mouse-ear cress).